Consider the following 130-residue polypeptide: Small ribosomal subunit protein uS8 (130 aa).

Belongs to the universal ribosomal protein uS8 family. Part of the 30S ribosomal subunit.

Functionally, one of the primary rRNA binding proteins, it binds directly to 16S rRNA central domain where it helps coordinate assembly of the platform of the 30S subunit. This Pyrobaculum islandicum (strain DSM 4184 / JCM 9189 / GEO3) protein is Small ribosomal subunit protein uS8.